The primary structure comprises 440 residues: Putative postmeiotic segregation increased 2-like protein 1 (440 aa).

Residues Arg-164–Arg-178 are compositionally biased toward basic and acidic residues. Residues Arg-164–Ile-215 form a disordered region. Residues Pro-230–Ser-364 form the Histidine kinase domain.

Belongs to the DNA mismatch repair MutL/HexB family. In terms of tissue distribution, highly expressed in kidney, spleen, adrenal gland, ovary and cerebellum and to a lower extent in liver, esophagus, stomach, duodenum, colon, bladder, uterus, lung, pancreas and cerebrum. Not expressed in heart.

In Homo sapiens (Human), this protein is Putative postmeiotic segregation increased 2-like protein 1 (PMS2P1).